The following is a 425-amino-acid chain: Inhibin beta A chain (425 aa).

The first 20 residues, 1–20 (MPLLWLRGFLLASCWIIVRS), serve as a signal peptide directing secretion. Positions 21-309 (SPTPGSEGHS…EDHPHRRRRR (289 aa)) are excised as a propeptide. The N-linked (GlcNAc...) asparagine glycan is linked to Asn165. The disordered stretch occupies residues 259 to 289 (KKKKKEEEGEGKKRDGEGGAGGDEEKEQSHR). Positions 263-275 (KEEEGEGKKRDGE) are enriched in basic and acidic residues. Disulfide bonds link Cys313–Cys321, Cys320–Cys390, Cys349–Cys422, and Cys353–Cys424.

This sequence belongs to the TGF-beta family. As to quaternary structure, dimeric, linked by one or more disulfide bonds. Inhibin A is a dimer of alpha/INHA and beta-A/INHBA. Activin A is a homodimer of beta-A/INHBA. Activin AB is a dimer of beta-A/INHBA and beta-B/INHBB. Interacts with FST and FSTL3; these interactions prevent activin A interaction to its type II receptor. Activin A interacts with ACVR2A. Activin A interacts with BMPR2. Inhibin A interacts with ACVR1; this interaction creates a non-signaling complex (NSC) that inhibits ACVR1-mediated BMP signaling. Inhibin A interacts with ACVR2A.

It localises to the secreted. Inhibins/activins are involved in regulating a number of diverse functions such as hypothalamic and pituitary hormone secretion, gonadal hormone secretion, germ cell development and maturation, erythroid differentiation, insulin secretion, nerve cell survival, embryonic axial development or bone growth, depending on their subunit composition. Functionally, activin A is a homodimer of INHBA that plays a role in several essential biological processes including embryonic development, stem cell maintenance and differentiation, haematopoiesis, cell proliferation and tissue fibrosis. Signals through type I (such as ACVR1B or ACVR1C) and type II receptors (such as ACVR2A, ACVR2B or BMPR2) which, upon ligand binding, phosphorylate SMAD2 and SMAD3 intracellular signaling mediators that form a complex with SMAD4, translocate to the nucleus and modulate gene expression. Can also activate alternative non-canonical intracellular signaling pathways including the p38 MAPK, extracellular signal-regulated kinases 1/2 (ERK1/2) and c-Jun N-terminal kinases (JNKs) to modulate cell migration and differentiation. Alternatively, promotes osteoblastic differentiation via ACVRL1-SMAD1/5/9 pathway. In addition, can engage the type I receptor ACVR1 to form an ACVR1-activin A-type II receptor non-signaling complex (NSC) that renders receptors unavailable for engagement with BMPs, hence resulting in an apparent inhibition of ACVR1-mediated BMP signaling. Its function is as follows. Inhibin A is a dimer of alpha/INHA and beta-A/INHBA that functions as a feedback regulator in the hypothalamic-pituitary-gonadal (HPG) axis. Inhibits the secretion of FSH from the anterior pituitary gland by acting on pituitary gonadotrope cells. Antagonizes activin A by binding to the proteoglycan, betaglycan, and forming a stable complex with and, thereby, sequestering type II activin receptors while excluding type I receptor. This chain is Inhibin beta A chain (INHBA), found in Bos taurus (Bovine).